Reading from the N-terminus, the 464-residue chain is Aspartyl protease 37 (464 aa).

Positions 1-19 are cleaved as a signal peptide; sequence MNAAVLLLLLALAALPASC. N-linked (GlcNAc...) asparagine glycosylation is present at asparagine 41. The Peptidase A1 domain occupies 89–456; sequence YLVKLGIGTP…NLRRGRVTFV (368 aa). The active site involves aspartate 107. A disulfide bridge connects residues cysteine 117 and cysteine 123. N-linked (GlcNAc...) asparagine glycans are attached at residues asparagine 174 and asparagine 261. Residues 299–311 show a composition bias toward low complexity; it reads TTTTTATATATAP. Residues 299–319 are disordered; sequence TTTTTATATATAPAPAPTPSP. Residue asparagine 320 is glycosylated (N-linked (GlcNAc...) asparagine). The active site involves aspartate 337. Cysteine 376 and cysteine 420 are disulfide-bonded.

Belongs to the peptidase A1 family.

In terms of biological role, anther-specific aspartic protease involved in tapetal programmed cell death (PCD). Directly regulated by the transcription factor EAT1/DTD in anthers during tapetum PCD and degeneration. In Oryza sativa subsp. japonica (Rice), this protein is Aspartyl protease 37.